A 565-amino-acid polypeptide reads, in one-letter code: MDFLLALVLVSSLYLQAAAEFDGRWPRQIVSSIGLCRYGGRIDCCWGWARQSWGQCQPVCQPRCKHGECIGPNKCKCHPGYAGKTCNQDLNECGLKPRPCKHRCMNTYGSYKCYCLNGYMLMPDGSCSSALTCSMANCQYGCDVVKGQIRCQCPSPGLQLAPDGRTCVDVDECATGRASCPRFRQCVNTFGSYICKCHKGFNLMYIGGKYQCHDIDECSLGQYQCSSFARCYNIHGSYKCKCKEGYQGDGLTCVYIPKVMIEPSGPIHVPKGNGTILKGDRGHNNWIPDVGSTWWPPKTPYIPPIITNRPTSKPTTRPTPKPTPIPTPPPPPPLPTELRTPLPPTTPERPTPRLTSIAPAAGTPPGGITVDNRVQTDPQKLRGDVFIPRQPSNDLFEIFEIERGVSADDEAKDDPGILVHSCNFDHGLCGWIREKDNDLHWEPIRDPAGGQYLTVSAAKAPGGKAARLVLPLGRLMHSGDLCLSFRHKVTGLHSGTLQVFVRKHGAHGAALWGRNGGHGWRQTQITLRGADIKSVIFKGEKRRGHTGEIGLDDVSLKKGHCSEER.

An N-terminal signal peptide occupies residues 1–19 (MDFLLALVLVSSLYLQAAA). The 36-residue stretch at 52–87 (SWGQCQPVCQPRCKHGECIGPNKCKCHPGYAGKTCN) folds into the EGF-like 1 domain. 6 cysteine pairs are disulfide-bonded: C56–C69, C60–C75, C77–C86, C93–C104, C100–C113, and C115–C127. The region spanning 89-128 (DLNECGLKPRPCKHRCMNTYGSYKCYCLNGYMLMPDGSCS) is the EGF-like 2; calcium-binding domain. An EGF-like 3 domain is found at 132-168 (TCSMANCQYGCDVVKGQIRCQCPSPGLQLAPDGRTCV). One can recognise an EGF-like 4; calcium-binding domain in the interval 169–213 (DVDECATGRASCPRFRQCVNTFGSYICKCHKGFNLMYIGGKYQCH). Cystine bridges form between C173–C186, C180–C195, C197–C212, C218–C231, C225–C240, and C242–C253. The 41-residue stretch at 214–254 (DIDECSLGQYQCSSFARCYNIHGSYKCKCKEGYQGDGLTCV) folds into the EGF-like 5; calcium-binding domain. Positions 301 to 373 (YIPPIITNRP…PPGGITVDNR (73 aa)) are disordered. The segment covering 304–316 (PIITNRPTSKPTT) has biased composition (low complexity). Over residues 317 to 349 (RPTPKPTPIPTPPPPPPLPTELRTPLPPTTPER) the composition is skewed to pro residues. Residues 382–384 (RGD) carry the Integrin interaction motif. Positions 420 to 563 (HSCNFDHGLC…VSLKKGHCSE (144 aa)) constitute an MAM domain.

Belongs to the nephronectin family. Homodimer and homotrimer.

The protein localises to the secreted. The protein resides in the extracellular space. It localises to the extracellular matrix. Functional ligand of integrin alpha-8/beta-1 in kidney development. Regulates the expression of GDNF with integrin alpha-8/beta-1 which is essential for kidney development. May also play a role in the development and function of various tissues, regulating cell adhesion, spreading and survival through the binding of several integrins. The chain is Nephronectin (NPNT) from Pongo abelii (Sumatran orangutan).